The sequence spans 353 residues: sn-glycerol-3-phosphate import ATP-binding protein UgpC 3 (353 aa).

The region spanning 4–235 (IALKDVRKVY…PATTFVATFI (232 aa)) is the ABC transporter domain. 37-44 (GPSGCGKS) is a binding site for ATP.

Belongs to the ABC transporter superfamily. sn-glycerol-3-phosphate importer (TC 3.A.1.1.3) family. As to quaternary structure, the complex is composed of two ATP-binding proteins (UgpC), two transmembrane proteins (UgpA and UgpE) and a solute-binding protein (UgpB).

It localises to the cell inner membrane. The enzyme catalyses sn-glycerol 3-phosphate(out) + ATP + H2O = sn-glycerol 3-phosphate(in) + ADP + phosphate + H(+). Part of the ABC transporter complex UgpBAEC involved in sn-glycerol-3-phosphate (G3P) import. Responsible for energy coupling to the transport system. In Agrobacterium fabrum (strain C58 / ATCC 33970) (Agrobacterium tumefaciens (strain C58)), this protein is sn-glycerol-3-phosphate import ATP-binding protein UgpC 3.